Consider the following 492-residue polypeptide: Anthranilate synthase component 1 (492 aa).

Residues serine 48 and 273–275 (PYM) contribute to the L-tryptophan site. 308–309 (GT) contributes to the chorismate binding site. Glutamate 335 provides a ligand contact to Mg(2+). Chorismate is bound by residues tyrosine 423, arginine 443, 457 to 459 (GGG), and glycine 459. Glutamate 472 is a Mg(2+) binding site.

It belongs to the anthranilate synthase component I family. In terms of assembly, heterotetramer consisting of two non-identical subunits: a beta subunit (TrpG) and a large alpha subunit (TrpE). Mg(2+) is required as a cofactor.

It carries out the reaction chorismate + L-glutamine = anthranilate + pyruvate + L-glutamate + H(+). The protein operates within amino-acid biosynthesis; L-tryptophan biosynthesis; L-tryptophan from chorismate: step 1/5. Feedback inhibited by tryptophan. In terms of biological role, part of a heterotetrameric complex that catalyzes the two-step biosynthesis of anthranilate, an intermediate in the biosynthesis of L-tryptophan. In the first step, the glutamine-binding beta subunit (TrpG) of anthranilate synthase (AS) provides the glutamine amidotransferase activity which generates ammonia as a substrate that, along with chorismate, is used in the second step, catalyzed by the large alpha subunit of AS (TrpE) to produce anthranilate. In the absence of TrpG, TrpE can synthesize anthranilate directly from chorismate and high concentrations of ammonia. The sequence is that of Anthranilate synthase component 1 from Pseudomonas aeruginosa (strain ATCC 15692 / DSM 22644 / CIP 104116 / JCM 14847 / LMG 12228 / 1C / PRS 101 / PAO1).